The chain runs to 184 residues: Large ribosomal subunit protein uL22 (184 aa).

Positions 160 to 184 (PEEEVAQKKKISQKKLKKQKLMARE) are disordered. Residues 167–184 (KKKISQKKLKKQKLMARE) are compositionally biased toward basic residues.

The protein belongs to the universal ribosomal protein uL22 family. As to quaternary structure, component of the large ribosomal subunit.

The protein localises to the cytoplasm. Functionally, component of the large ribosomal subunit. The ribosome is a large ribonucleoprotein complex responsible for the synthesis of proteins in the cell. In Bos taurus (Bovine), this protein is Large ribosomal subunit protein uL22 (RPL17).